We begin with the raw amino-acid sequence, 255 residues long: Indole-3-glycerol phosphate synthase (255 aa).

This sequence belongs to the TrpC family.

It catalyses the reaction 1-(2-carboxyphenylamino)-1-deoxy-D-ribulose 5-phosphate + H(+) = (1S,2R)-1-C-(indol-3-yl)glycerol 3-phosphate + CO2 + H2O. It functions in the pathway amino-acid biosynthesis; L-tryptophan biosynthesis; L-tryptophan from chorismate: step 4/5. This chain is Indole-3-glycerol phosphate synthase, found in Shouchella clausii (strain KSM-K16) (Alkalihalobacillus clausii).